Here is a 910-residue protein sequence, read N- to C-terminus: Translation factor GUF1 homolog, mitochondrial (910 aa).

A disordered region spans residues 126 to 188; sequence RRGNGLPFER…DGGGAPEHPQ (63 aa). The 178-residue stretch at 189-366 folds into the tr-type G domain; the sequence is QNVRNFCILA…RIVSDIPCPA (178 aa). Residues 198-205, 259-263, and 313-316 contribute to the GTP site; these read AHIDSGKS, DTPGH, and NKID. Residues 639–683 form a disordered region; it reads GSGDGRADGSADGSADGSADGSGDSSAHGSSDRRGAGCARGSDDI. A compositionally biased stretch (low complexity) spans 646–667; it reads DGSADGSADGSADGSGDSSAHG.

Belongs to the TRAFAC class translation factor GTPase superfamily. Classic translation factor GTPase family. LepA subfamily.

Its subcellular location is the mitochondrion inner membrane. The catalysed reaction is GTP + H2O = GDP + phosphate + H(+). Functionally, promotes mitochondrial protein synthesis. May act as a fidelity factor of the translation reaction, by catalyzing a one-codon backward translocation of tRNAs on improperly translocated ribosomes. Binds to mitochondrial ribosomes in a GTP-dependent manner. The protein is Translation factor GUF1 homolog, mitochondrial of Plasmodium vivax (strain Salvador I).